A 338-amino-acid chain; its full sequence is MTKQKIAVLGPGSWGTALAQVLNDNGHEVRLWGNVVEQIEEINTNHTNQRYFKDITLDSKIKAYTNLEEAINNVDSILFVVPTKVTRLVAKQVANLLKHKVVLMHASKGLEPGTHERLSTILEEEISEQYRSDIVVVSGPSHAEEAIVRDITLITAASKDIEAAKYVQKLFSNHYFRLYTNTDVVGVETAGALKNIIAVGAGALHGLGYGDNAKAAIITRGLAEITRLGVQLGADPLTFSGLSGVGDLIVTGTSVHSRNWRAGDALGRGEKLEDIEKNMGMVIEGISTTKVAYEIAQNLNVYMPITEAIYKSIYEGANIKDSILDMMSNEFRSENEWH.

Serine 13, tryptophan 14, and lysine 108 together coordinate NADPH. Residues lysine 108, glycine 139, and serine 141 each coordinate sn-glycerol 3-phosphate. Alanine 143 serves as a coordination point for NADPH. Sn-glycerol 3-phosphate contacts are provided by lysine 194, aspartate 247, serine 257, arginine 258, and asparagine 259. The active-site Proton acceptor is lysine 194. Residue arginine 258 coordinates NADPH. Valine 282 and glutamate 284 together coordinate NADPH.

Belongs to the NAD-dependent glycerol-3-phosphate dehydrogenase family.

It localises to the cytoplasm. It catalyses the reaction sn-glycerol 3-phosphate + NAD(+) = dihydroxyacetone phosphate + NADH + H(+). The catalysed reaction is sn-glycerol 3-phosphate + NADP(+) = dihydroxyacetone phosphate + NADPH + H(+). The protein operates within membrane lipid metabolism; glycerophospholipid metabolism. Catalyzes the reduction of the glycolytic intermediate dihydroxyacetone phosphate (DHAP) to sn-glycerol 3-phosphate (G3P), the key precursor for phospholipid synthesis. This chain is Glycerol-3-phosphate dehydrogenase [NAD(P)+], found in Streptococcus agalactiae serotype V (strain ATCC BAA-611 / 2603 V/R).